The primary structure comprises 786 residues: MSDQDHSMDEVTAVKIEKGVGGNNGGSGNGGGAAFSQTRSSSTGSSSSSGGGGGQESQPSPLALLAATCSRIESPNENSNNSQGPSQSGGTGELDLTATQLSQGANGWQIISSSSGATPTSKEQSGNSTNGSNGSESSKNRTVSGGQYVVAATPNLQNQQVLTGLPGVMPNIQYQVIPQFQTVDGQQLQFAATGAQVQQDGSGQIQIIPGANQQIITNRGSGGNIIAAMPNLLQQAVPLQGLANNVLSGQTQYVTNVPVALNGNITLLPVNSVSAATLTPSSQAGTISSSGSQESGSQPVTSGTAISSASLVSSQASSSSFFTNANSYSTTTTTSNMGIMNFTSSGSSGTSSQGQTSQRVGGLQGSDSLNIQQNQTSGGSLQGSQQKEGEQSQQTQQQQILIQPQLVQGGQALQALQAAPLSGQTFTTQAISQETLQNLQLQAVQNSGPIIIRTPTVGPNGQVSWQTLQLQNLQVQNPQAQTITLAPMQGVSLGQTSSSNTTLTPIASAASIPAGTVTVNAAQLSSMPGLQTINLSALGTSGIQVHQLPGLPLAIANTPGDHGAQLGLHGPGGDGIHDETAGGEEGENSPDPQPQAGRRTRREACTCPYCKDSEGRGSGDPGKKKQHICHIQGCGKVYGKTSHLRAHLRWHTGERPFMCNWSYCGKRFTRSDELQRHKRTHTGEKKFACPECPKRFMRSDHLSKHIKTHQNKKGGPGVALSVGTLPLDSGAGSEGSGTATPSALITTNMVAMEAICPEGIARLANSGINVMQVTELQSINISGNGF.

Positions 1–94 (MSDQDHSMDE…PSQSGGTGEL (94 aa)) are disordered. Ser-2 carries the N-acetylserine modification. Phosphoserine occurs at positions 2 and 7. The segment at 2 to 83 (SDQDHSMDEV…SPNENSNNSQ (82 aa)) is repressor domain. Lys-15 participates in a covalent cross-link: Glycyl lysine isopeptide (Lys-Gly) (interchain with G-Cter in SUMO); alternate. A Glycyl lysine isopeptide (Lys-Gly) (interchain with G-Cter in SUMO2); alternate cross-link involves residue Lys-15. Over residues 19–33 (GVGGNNGGSGNGGGA) the composition is skewed to gly residues. Over residues 36–48 (SQTRSSSTGSSSS) the composition is skewed to low complexity. A Phosphoserine modification is found at Ser-60. Over residues 73 to 86 (ESPNENSNNSQGPS) the composition is skewed to low complexity. Position 102 is a phosphoserine; by ATM (Ser-102). The span at 110–124 (IISSSSGATPTSKEQ) shows a compositional bias: polar residues. Residues 110–143 (IISSSSGATPTSKEQSGNSTNGSNGSESSKNRTV) are disordered. A compositionally biased stretch (low complexity) spans 125–137 (SGNSTNGSNGSES). Positions 147-252 (QYVVAATPNL…ANNVLSGQTQ (106 aa)) are transactivation domain A (Gln-rich). The interval 262–496 (NGNITLLPVN…PMQGVSLGQT (235 aa)) is transactivation domain B (Gln-rich). Thr-279 is modified (phosphothreonine; by MAPK8). Disordered regions lie at residues 281 to 303 (SSQA…VTSG) and 332 to 397 (TTTS…QTQQ). Composition is skewed to low complexity over residues 343 to 358 (TSSG…QTSQ) and 372 to 397 (QQNQ…QTQQ). Phosphothreonine; by MAPK1 and MAPK3 is present on Thr-454. The 9aaTAD signature appears at 463–471 (VSWQTLQLQ). An O-linked (GlcNAc) serine glycan is attached at Ser-492. The transactivation domain C (highly charged) stretch occupies residues 497-611 (SSSNTTLTPI…REACTCPYCK (115 aa)). The disordered stretch occupies residues 562–600 (HGAQLGLHGPGGDGIHDETAGGEEGENSPDPQPQAGRRT). Ser-613 bears the Phosphoserine; alternate mark. O-linked (GlcNAc) serine; alternate glycosylation occurs at Ser-613. Positions 620–786 (DPGKKKQHIC…QSINISGNGF (167 aa)) are VZV IE62-binding. C2H2-type zinc fingers lie at residues 627–656 (HICH…GERP), 657–686 (FMCN…GEKK), and 687–714 (FACP…NKKG). A Phosphothreonine; alternate modification is found at Thr-641. Thr-641 is a glycosylation site (O-linked (GlcNAc) threonine; alternate). O-linked (GlcNAc) serine; alternate glycosylation occurs at Ser-642. Ser-642 bears the Phosphoserine; by PKC/PRKCZ; alternate mark. A Phosphothreonine; by PKC/PRKCZ modification is found at Thr-652. A Phosphothreonine modification is found at Thr-669. Position 671 is a phosphoserine; by PKC/PRKCZ (Ser-671). Thr-682 carries the post-translational modification Phosphothreonine; by PKC/PRKCZ. Ser-699 and Ser-703 each carry phosphoserine; alternate. 2 O-linked (GlcNAc) serine; alternate glycosylation sites follow: Ser-699 and Ser-703. Lys-704 carries the post-translational modification N6-acetyllysine. Residues 709–786 (HQNKKGGPGV…QSINISGNGF (78 aa)) are domain D. Thr-740 bears the Phosphothreonine; by MAPK1, MAPK3 and MAPK8 mark.

This sequence belongs to the Sp1 C2H2-type zinc-finger protein family. As to quaternary structure, interacts with ATF7IP, ATF7IP2, BAHD1, POGZ, HCFC1, AATF and PHC2. Interacts with SV40 VP2/3 proteins. Interacts with SV40 major capsid protein VP1; this interaction leads to a cooperativity between the 2 proteins in DNA binding. Interacts with HLTF; the interaction may be required for basal transcriptional activity of HLTF. Interacts (deacetylated form) with EP300; the interaction enhances gene expression. Interacts with HDAC1 and JUN. Interacts with ELF1; the interaction is inhibited by glycosylation of SP1. Interaction with NFYA; the interaction is inhibited by glycosylation of SP1. Interacts with SMARCA4/BRG1. Interacts with ATF7IP and TBP. Interacts with MEIS2 and PBX1. Interacts with EGR1. Interacts with RNF112 in an oxidative stress-regulated manner. Interacts with ZBTB7A; ZBTB7A prevents the binding to GC-rich motifs in promoters and represses the transcriptional activity of SP1. Interacts with DDX3X; this interaction potentiates SP1-induced CDKN1A/WAF1/CIP1 transcription. Interacts with MSX1; the interaction may inhibit MSX1 autoinactivation. Interacts with MSX3. In terms of processing, phosphorylated on multiple serine and threonine residues. Phosphorylation is coupled to ubiquitination, sumoylation and proteolytic processing. Phosphorylation on Ser-60 enhances proteolytic cleavage. Phosphorylation on Ser-7 enhances ubiquitination and protein degradation. Hyperphosphorylation on Ser-102 in response to DNA damage has no effect on transcriptional activity. MAPK1/MAPK3-mediated phosphorylation on Thr-454 and Thr-740 enhances VEGF transcription but, represses FGF2-triggered PDGFR-alpha transcription. Also implicated in the repression of RECK by ERBB2. Hyperphosphorylated on Thr-279 and Thr-740 during mitosis by MAPK8 shielding SP1 from degradation by the ubiquitin-dependent pathway. Phosphorylated in the zinc-finger domain by calmodulin-activated PKCzeta. Phosphorylation on Ser-642 by PKCzeta is critical for TSA-activated LHR gene expression through release of its repressor, p107. Phosphorylation on Thr-669, Ser-671 and Thr-682 is stimulated by angiotensin II via the AT1 receptor inducing increased binding to the PDGF-D promoter. This phosphorylation is increased in injured artey wall. Ser-60 and Thr-682 can both be dephosphorylated by PP2A during cell-cycle interphase. Dephosphorylation on Ser-60 leads to increased chromatin association during interphase and increases the transcriptional activity. On insulin stimulation, sequentially glycosylated and phosphorylated on several C-terminal serine and threonine residues. Post-translationally, acetylated. Acetylation/deacetylation events affect transcriptional activity. Deacetylation leads to an increase in the expression of the 12(s)-lipooxygenase gene through recruitment of p300 to the promoter. Deacetylated by HDAC6 which leads to increased expression of ENG and positive regulation of angiogenesis. Ubiquitinated. Ubiquitination occurs on the C-terminal proteolytically-cleaved peptide and is triggered by phosphorylation. In terms of processing, sumoylated with SUMO1. Sumoylation modulates proteolytic cleavage of the N-terminal repressor domain. Sumoylation levels are attenuated during tumorigenesis. Phosphorylation mediates SP1 desumoylation. Post-translationally, proteolytic cleavage in the N-terminal repressor domain is prevented by sumoylation. The C-terminal cleaved product is susceptible to degradation. O-glycosylated; Contains 8 N-acetylglucosamine side chains. Levels are controlled by insulin and the SP1 phosphorylation states. Insulin-mediated O-glycosylation locates SP1 to the nucleus, where it is sequentially deglycosylated and phosphorylated. O-glycosylation affects transcriptional activity through disrupting the interaction with a number of transcription factors including ELF1 and NFYA. Inhibited by peroxisomome proliferator receptor gamma (PPARgamma). As to expression, expressed in all tissues tested, including lung, kidney, spleen and thymus.

The protein resides in the nucleus. It localises to the cytoplasm. Transcription factor that can activate or repress transcription in response to physiological and pathological stimuli. Binds with high affinity to GC-rich motifs and regulates the expression of a large number of genes involved in a variety of processes such as cell growth, apoptosis, differentiation and immune responses. Highly regulated by post-translational modifications (phosphorylations, sumoylation, proteolytic cleavage, glycosylation and acetylation). Also binds the PDGFR-alpha G-box promoter. May have a role in modulating the cellular response to DNA damage. Implicated in chromatin remodeling. Plays an essential role in the regulation of FE65 gene expression. Positively regulates the transcription of the core clock component BMAL1. Plays a role in the recruitment of SMARCA4/BRG1 on the c-FOS promoter. Plays a role in protecting cells against oxidative stress following brain injury by regulating the expression of RNF112. The protein is Transcription factor Sp1 (Sp1) of Rattus norvegicus (Rat).